Consider the following 437-residue polypeptide: Probable peptidoglycan-N-acetylglucosamine deacetylase ARB_03699 (437 aa).

The N-terminal stretch at 1 to 20 (MLMRLYTFFAAALLACCAAA) is a signal peptide. The disordered stretch occupies residues 47-132 (STRAATTTTT…STSAAAPSTP (86 aa)). N-linked (GlcNAc...) asparagine glycosylation is present at Asn99. The 186-residue stretch at 149-334 (GTVAITFDDG…EVKRRGLKAV (186 aa)) folds into the NodB homology domain. Asp156 functions as the Proton acceptor in the catalytic mechanism. 3 residues coordinate Zn(2+): Asp157, His209, and His213. Tyr251 is a binding site for substrate. His308 functions as the Proton donor in the catalytic mechanism. Positions 350–370 (TTPVQVPTGTSTTSPTATPTS) are enriched in low complexity. A disordered region spans residues 350-384 (TTPVQVPTGTSTTSPTATPTSPGTPPPAPTQPGVA). Residues 389 to 435 (KWHTVVSGDTCYDIAAANGISLDNLYKWNPAVGTSCASLWLGYAVCV) form the LysM domain.

The cofactor is Zn(2+). Co(2+) is required as a cofactor.

It localises to the secreted. It catalyses the reaction peptidoglycan-N-acetyl-D-glucosamine + H2O = peptidoglycan-D-glucosamine + acetate.. Catalyzes the deacetylation of N-acetylglucosamine (GlcNAc) residues in peptidoglycan. The protein is Probable peptidoglycan-N-acetylglucosamine deacetylase ARB_03699 of Arthroderma benhamiae (strain ATCC MYA-4681 / CBS 112371) (Trichophyton mentagrophytes).